The chain runs to 586 residues: Glutathione S-transferase C-terminal domain-containing protein homolog (586 aa).

The GST C-terminal domain occupies 121-276 (LGFKESCLLA…GTCAKILGDL (156 aa)).

It belongs to the GSTCD family.

In Drosophila pseudoobscura pseudoobscura (Fruit fly), this protein is Glutathione S-transferase C-terminal domain-containing protein homolog.